A 116-amino-acid chain; its full sequence is Holo-[acyl-carrier-protein] synthase (116 aa).

Positions 5 and 50 each coordinate Mg(2+).

This sequence belongs to the P-Pant transferase superfamily. AcpS family. It depends on Mg(2+) as a cofactor.

The protein resides in the cytoplasm. The catalysed reaction is apo-[ACP] + CoA = holo-[ACP] + adenosine 3',5'-bisphosphate + H(+). Transfers the 4'-phosphopantetheine moiety from coenzyme A to a Ser of acyl-carrier-protein. The chain is Holo-[acyl-carrier-protein] synthase from Nitratiruptor sp. (strain SB155-2).